A 488-amino-acid chain; its full sequence is Probable glycine dehydrogenase (decarboxylating) subunit 2 (488 aa).

At lysine 274 the chain carries N6-(pyridoxal phosphate)lysine.

The protein belongs to the GcvP family. C-terminal subunit subfamily. In terms of assembly, the glycine cleavage system is composed of four proteins: P, T, L and H. In this organism, the P 'protein' is a heterodimer of two subunits. Pyridoxal 5'-phosphate is required as a cofactor.

The enzyme catalyses N(6)-[(R)-lipoyl]-L-lysyl-[glycine-cleavage complex H protein] + glycine + H(+) = N(6)-[(R)-S(8)-aminomethyldihydrolipoyl]-L-lysyl-[glycine-cleavage complex H protein] + CO2. The glycine cleavage system catalyzes the degradation of glycine. The P protein binds the alpha-amino group of glycine through its pyridoxal phosphate cofactor; CO(2) is released and the remaining methylamine moiety is then transferred to the lipoamide cofactor of the H protein. This Listeria monocytogenes serotype 4a (strain HCC23) protein is Probable glycine dehydrogenase (decarboxylating) subunit 2.